The chain runs to 471 residues: Argininosuccinate lyase (471 aa).

Belongs to the lyase 1 family. Argininosuccinate lyase subfamily.

It is found in the cytoplasm. It catalyses the reaction 2-(N(omega)-L-arginino)succinate = fumarate + L-arginine. It participates in amino-acid biosynthesis; L-arginine biosynthesis; L-arginine from L-ornithine and carbamoyl phosphate: step 3/3. In Deinococcus radiodurans (strain ATCC 13939 / DSM 20539 / JCM 16871 / CCUG 27074 / LMG 4051 / NBRC 15346 / NCIMB 9279 / VKM B-1422 / R1), this protein is Argininosuccinate lyase.